The following is a 153-amino-acid chain: Methylglyoxal synthase (153 aa).

Residues 3–153 (DQVNRPKGVT…SYLSRDVPGN (151 aa)) enclose the MGS-like domain. Substrate contacts are provided by residues His19, Lys23, 45–48 (TGTT), and 65–66 (SG). The active-site Proton donor/acceptor is Asp71. His98 provides a ligand contact to substrate.

It belongs to the methylglyoxal synthase family.

The catalysed reaction is dihydroxyacetone phosphate = methylglyoxal + phosphate. Its function is as follows. Catalyzes the formation of methylglyoxal from dihydroxyacetone phosphate. In Hahella chejuensis (strain KCTC 2396), this protein is Methylglyoxal synthase.